A 92-amino-acid polypeptide reads, in one-letter code: Small ribosomal subunit protein uS19 (92 aa).

The protein belongs to the universal ribosomal protein uS19 family.

Protein S19 forms a complex with S13 that binds strongly to the 16S ribosomal RNA. This is Small ribosomal subunit protein uS19 from Paracoccus denitrificans (strain Pd 1222).